The following is a 689-amino-acid chain: DNA ligase (689 aa).

NAD(+) is bound by residues 51–55, 100–101, and Glu-129; these read DSEYD and SL. The active-site N6-AMP-lysine intermediate is the Lys-131. NAD(+) contacts are provided by Arg-152, Glu-189, Lys-308, and Lys-332. Residues Cys-426, Cys-429, Cys-444, and Cys-450 each coordinate Zn(2+). A BRCT domain is found at 609–689; it reads ADEQPLKGQT…ELLALLAANR (81 aa).

Belongs to the NAD-dependent DNA ligase family. LigA subfamily. The cofactor is Mg(2+). Mn(2+) is required as a cofactor.

It catalyses the reaction NAD(+) + (deoxyribonucleotide)n-3'-hydroxyl + 5'-phospho-(deoxyribonucleotide)m = (deoxyribonucleotide)n+m + AMP + beta-nicotinamide D-nucleotide.. DNA ligase that catalyzes the formation of phosphodiester linkages between 5'-phosphoryl and 3'-hydroxyl groups in double-stranded DNA using NAD as a coenzyme and as the energy source for the reaction. It is essential for DNA replication and repair of damaged DNA. This Shewanella oneidensis (strain ATCC 700550 / JCM 31522 / CIP 106686 / LMG 19005 / NCIMB 14063 / MR-1) protein is DNA ligase.